The chain runs to 430 residues: Glutamyl-tRNA reductase (430 aa).

Residues Thr-49–Arg-52, Ser-109, Glu-114–Gln-116, and Gln-120 each bind substrate. Cys-50 acts as the Nucleophile in catalysis. Gly-189 to Ala-194 contacts NADP(+).

The protein belongs to the glutamyl-tRNA reductase family. Homodimer.

It carries out the reaction (S)-4-amino-5-oxopentanoate + tRNA(Glu) + NADP(+) = L-glutamyl-tRNA(Glu) + NADPH + H(+). It functions in the pathway porphyrin-containing compound metabolism; protoporphyrin-IX biosynthesis; 5-aminolevulinate from L-glutamyl-tRNA(Glu): step 1/2. The protein operates within porphyrin-containing compound metabolism; chlorophyll biosynthesis. Functionally, catalyzes the NADPH-dependent reduction of glutamyl-tRNA(Glu) to glutamate 1-semialdehyde (GSA). In Crocosphaera subtropica (strain ATCC 51142 / BH68) (Cyanothece sp. (strain ATCC 51142)), this protein is Glutamyl-tRNA reductase.